The following is a 662-amino-acid chain: p-hydroxybenzoic acid efflux pump subunit AaeB (662 aa).

The next 11 membrane-spanning stretches (helical) occupy residues F22–L42, A52–I72, G76–A96, V102–V122, I129–L149, E161–I181, L378–V398, F415–P435, Q439–V459, G465–F485, and L491–I511.

It belongs to the aromatic acid exporter ArAE (TC 2.A.85) family.

The protein resides in the cell inner membrane. Functionally, forms an efflux pump with AaeA. Could function as a metabolic relief valve, allowing to eliminate certain compounds when they accumulate to high levels in the cell. The chain is p-hydroxybenzoic acid efflux pump subunit AaeB from Pectobacterium atrosepticum (strain SCRI 1043 / ATCC BAA-672) (Erwinia carotovora subsp. atroseptica).